Consider the following 886-residue polypeptide: Extended synaptotagmin-3 (886 aa).

Residues 1–21 (MRAEEPCAPGAPSALGAQRTP) form a disordered region. Residues 1-29 (MRAEEPCAPGAPSALGAQRTPGPELRLSS) lie on the Cytoplasmic side of the membrane. The next 2 membrane-spanning stretches (helical) occupy residues 30 to 50 (QLLP…GPVY) and 51 to 71 (LAGY…LWMW). The Cytoplasmic portion of the chain corresponds to 72 to 886 (WRRNRRGKLG…ELTPNGQPRS (815 aa)). The 178-residue stretch at 114–291 (DVERVEWANK…LPNRVTVPVK (178 aa)) folds into the SMP-LTD domain. C2 domains follow at residues 291–408 (KKGL…DEWF) and 426–566 (SLLT…QLDH). The Ca(2+) site is built by Lys321, Asp322, Asp332, Asp379, Glu380, Asp381, Asp383, Asp385, and Asp386. Residues 613-673 (QGPKAQPQEE…PEPKGKDSAK (61 aa)) are disordered. Residues 642 to 659 (RSTTTTTSATTVATEPTS) are compositionally biased toward low complexity. Over residues 664–673 (PEPKGKDSAK) the composition is skewed to basic and acidic residues. A C2 3 domain is found at 754 to 876 (QLGEIQLTVR…DLIKGFSQWY (123 aa)). The required for phosphatidylinositol 4,5-bisphosphate-dependent location at the cell membrane stretch occupies residues 801–808 (RKWACRKK).

It belongs to the extended synaptotagmin family. In terms of assembly, interacts with ESYT1 and ESYT2. Widely expressed with high level in cerebellum and skin.

It is found in the cell membrane. Its subcellular location is the endoplasmic reticulum membrane. Binds glycerophospholipids in a barrel-like domain and may play a role in cellular lipid transport. Tethers the endoplasmic reticulum to the cell membrane and promotes the formation of appositions between the endoplasmic reticulum and the cell membrane. This Homo sapiens (Human) protein is Extended synaptotagmin-3.